A 712-amino-acid polypeptide reads, in one-letter code: Interleukin-1 receptor-associated kinase 1 (712 aa).

The 80-residue stretch at 27–106 (MCRFYKVMDA…DIITAWHPPA (80 aa)) folds into the Death domain. Thr66 bears the Phosphothreonine; by PKC/PRKCI mark. The segment at 105–187 (PAPLPSPGTT…STKPGPESSV (83 aa)) is disordered. The interval 110 to 211 (SPGTTAPRPS…LCEISRGTHN (102 aa)) is proST region. A compositionally biased stretch (low complexity) spans 115–133 (APRPSSIPAPAEAEAWSPR). Phosphoserine is present on Ser131. A Glycyl lysine isopeptide (Lys-Gly) (interchain with G-Cter in ubiquitin) cross-link involves residue Lys134. Over residues 137-154 (SSASTFLSPAFPGSQTHS) the composition is skewed to polar residues. Lys180 is covalently cross-linked (Glycyl lysine isopeptide (Lys-Gly) (interchain with G-Cter in ubiquitin)). The residue at position 209 (Thr209) is a Phosphothreonine; by IRAK4. In terms of domain architecture, Protein kinase spans 212–521 (FSEELKIGEG…TQVYERLEKL (310 aa)). Residues 218-226 (IGEGGFGCV) and Lys239 contribute to the ATP site. The Proton acceptor role is filled by Asp340. ATP-binding positions include 342-345 (KSSN) and Asp358. Ser371 and Ser375 each carry phosphoserine. At Thr387 the chain carries Phosphothreonine. Disordered regions lie at residues 532–591 (SEAA…SDES), 613–660 (APLR…PPQI), and 690–712 (SSLP…EFQS). Residues 543 to 553 (QENSYVSSTGR) are compositionally biased toward polar residues. Phosphoserine is present on Ser556. Composition is skewed to low complexity over residues 562-575 (QPLA…AQAA) and 643-658 (EGLA…SEPP).

The protein belongs to the protein kinase superfamily. TKL Ser/Thr protein kinase family. Pelle subfamily. In terms of assembly, homodimer. Forms a complex with TRAF6, PELI1, IRAK4 and MYD88. Direct binding of SMAD6 to PELI1 prevents complex formation and hence negatively regulates IL1R-TLR signaling and eventually NF-kappa-B-mediated gene expression. The TRAF6-PELI1-IRAK4-MYD88 complex recruits MAP3K7/TAK1, TAB1 and TAB2 to mediate NF-kappa-B activation. Interaction with MYD88 recruits IRAK1 to the stimulated receptor complex. Interacts with TOLLIP; this interaction occurs in the cytosol prior to receptor activation. Interacts with IL1RL1. Interacts with PELI1 and TRAF6. Interacts (when polyubiquitinated) with IKBKG/NEMO. Interacts with RSAD2/viperin. Interacts with IRAK1BP1. Interacts with PELI2. Interacts with ZC3H12A; this interaction increases the interaction between ZC3H12A and IKBKB/IKKB. Interacts with IRAK4. Interacts with PELI3. Interacts with INAVA; the interaction takes place upon PRR stimulation. Interacts (via C-terminus) with NFATC4 (via N-terminus). As to quaternary structure, (Microbial infection) Interacts with mumps virus protein SH; this interaction inhibits downstream NF-kappa-B pathway activation. (Microbial infection) Interacts with alphaviruses SINV, CHIKV, RRV, VEEV and EEEV capsid proteins; the interactions lead to inhibition of IRAK1-dependent signaling. Mg(2+) serves as cofactor. Following recruitment on the activated receptor complex, phosphorylated on Thr-209, probably by IRAK4, resulting in a conformational change of the kinase domain, allowing further phosphorylations to take place. Thr-387 phosphorylation in the activation loop is required to achieve full enzymatic activity. In terms of processing, polyubiquitinated by TRAF6 after cell stimulation with IL-1-beta by PELI1, PELI2 and PELI3. Polyubiquitination occurs with polyubiquitin chains linked through 'Lys-63'. Ubiquitination promotes interaction with NEMO/IKBKG. Also sumoylated; leading to nuclear translocation. In terms of tissue distribution, isoform 1 and isoform 2 are ubiquitously expressed in all tissues examined, with isoform 1 being more strongly expressed than isoform 2.

The protein localises to the cytoplasm. Its subcellular location is the nucleus. It localises to the lipid droplet. It catalyses the reaction L-seryl-[protein] + ATP = O-phospho-L-seryl-[protein] + ADP + H(+). The enzyme catalyses L-threonyl-[protein] + ATP = O-phospho-L-threonyl-[protein] + ADP + H(+). In terms of biological role, serine/threonine-protein kinase that plays a critical role in initiating innate immune response against foreign pathogens. Involved in Toll-like receptor (TLR) and IL-1R signaling pathways. Is rapidly recruited by MYD88 to the receptor-signaling complex upon TLR activation. Association with MYD88 leads to IRAK1 phosphorylation by IRAK4 and subsequent autophosphorylation and kinase activation. Phosphorylates E3 ubiquitin ligases Pellino proteins (PELI1, PELI2 and PELI3) to promote pellino-mediated polyubiquitination of IRAK1. Then, the ubiquitin-binding domain of IKBKG/NEMO binds to polyubiquitinated IRAK1 bringing together the IRAK1-MAP3K7/TAK1-TRAF6 complex and the NEMO-IKKA-IKKB complex. In turn, MAP3K7/TAK1 activates IKKs (CHUK/IKKA and IKBKB/IKKB) leading to NF-kappa-B nuclear translocation and activation. Alternatively, phosphorylates TIRAP to promote its ubiquitination and subsequent degradation. Phosphorylates the interferon regulatory factor 7 (IRF7) to induce its activation and translocation to the nucleus, resulting in transcriptional activation of type I IFN genes, which drive the cell in an antiviral state. When sumoylated, translocates to the nucleus and phosphorylates STAT3. The sequence is that of Interleukin-1 receptor-associated kinase 1 from Homo sapiens (Human).